Reading from the N-terminus, the 248-residue chain is Putative homeobox-leucine zipper protein HOX26 (248 aa).

Residues 50–118 (KKVAAAAVVA…GDEEGASRKK (69 aa)) form a disordered region. The segment covering 79 to 89 (RQRRSCKKGRR) has biased composition (basic residues). A DNA-binding region (homeobox) is located at residues 114–173 (ASRKKLRLTGEQATLLEDSFRAHNILSHAEKQELAGKLGLSARQVEVWFQNRRARTKLKQ). Residues 172 to 216 (KQTEADCDLLRRWCDHLAADNARLRRDLAELRRSSSSPPVSGLAV) form a leucine-zipper region.

It belongs to the HD-ZIP homeobox family. Class II subfamily.

It is found in the nucleus. In terms of biological role, probable transcription factor. This chain is Putative homeobox-leucine zipper protein HOX26 (HOX26), found in Oryza sativa subsp. japonica (Rice).